Here is a 258-residue protein sequence, read N- to C-terminus: 6-carboxyhexanoate--CoA ligase (258 aa).

It belongs to the BioW family. Homodimer. It depends on Mg(2+) as a cofactor.

The enzyme catalyses heptanedioate + ATP + CoA = 6-carboxyhexanoyl-CoA + AMP + diphosphate. Its pathway is metabolic intermediate metabolism; pimeloyl-CoA biosynthesis; pimeloyl-CoA from pimelate: step 1/1. Its function is as follows. Catalyzes the transformation of pimelate into pimeloyl-CoA with concomitant hydrolysis of ATP to AMP. This is 6-carboxyhexanoate--CoA ligase from Bacillus subtilis (strain BSn5).